Here is a 334-residue protein sequence, read N- to C-terminus: Ornithine carbamoyltransferase (334 aa).

Residues 57 to 60, Q84, R108, and 135 to 138 each bind carbamoyl phosphate; these read STRT and HPTQ. L-ornithine-binding positions include N169, D233, and 237 to 238; that span reads SM. Residues 275-276 and R320 each bind carbamoyl phosphate; that span reads CL.

It belongs to the aspartate/ornithine carbamoyltransferase superfamily. OTCase family.

It localises to the cytoplasm. The catalysed reaction is carbamoyl phosphate + L-ornithine = L-citrulline + phosphate + H(+). The protein operates within amino-acid biosynthesis; L-arginine biosynthesis; L-arginine from L-ornithine and carbamoyl phosphate: step 1/3. Its function is as follows. Reversibly catalyzes the transfer of the carbamoyl group from carbamoyl phosphate (CP) to the N(epsilon) atom of ornithine (ORN) to produce L-citrulline. The chain is Ornithine carbamoyltransferase from Vibrio cholerae serotype O1 (strain ATCC 39315 / El Tor Inaba N16961).